The chain runs to 94 residues: Integration host factor subunit beta (94 aa).

The protein belongs to the bacterial histone-like protein family. In terms of assembly, heterodimer of an alpha and a beta chain.

In terms of biological role, this protein is one of the two subunits of integration host factor, a specific DNA-binding protein that functions in genetic recombination as well as in transcriptional and translational control. The protein is Integration host factor subunit beta of Escherichia coli O127:H6 (strain E2348/69 / EPEC).